Reading from the N-terminus, the 357-residue chain is Snake venom metalloproteinase H4 (357 aa).

The signal sequence occupies residues 1–6 (FPYQGS). The propeptide occupies 7 to 176 (SIMLESGKVN…KKASQLIVST (170 aa)). The Peptidase M12B domain maps to 180 to 357 (RYMEIVIVVD…EVIKYFLDSK (178 aa)). Histidine 316 is a Zn(2+) binding site. The active site involves glutamate 317. Residues histidine 320 and histidine 326 each coordinate Zn(2+). Cysteine 333 and cysteine 339 are joined by a disulfide.

The protein belongs to the venom metalloproteinase (M12B) family. P-I subfamily. As to quaternary structure, monomer. It depends on Zn(2+) as a cofactor. As to expression, expressed by the venom gland.

Its subcellular location is the secreted. Snake venom metalloproteinase that impairs hemostasis in the envenomed animal. The chain is Snake venom metalloproteinase H4 from Deinagkistrodon acutus (Hundred-pace snake).